Reading from the N-terminus, the 288-residue chain is Serine/threonine-protein kinase pef1 (288 aa).

The region spanning 3-285 is the Protein kinase domain; the sequence is YQRLEKLGEG…GQDALQHAWF (283 aa). Residues 9-17 and lysine 32 each bind ATP; that span reads LGEGTYAHV. A Phosphothreonine modification is found at threonine 13. Phosphotyrosine is present on tyrosine 14. Aspartate 126 serves as the catalytic Proton acceptor.

Belongs to the protein kinase superfamily. CMGC Ser/Thr protein kinase family. CDC2/CDKX subfamily. In terms of assembly, interacts with the pas1 cyclin.

The enzyme catalyses L-seryl-[protein] + ATP = O-phospho-L-seryl-[protein] + ADP + H(+). It catalyses the reaction L-threonyl-[protein] + ATP = O-phospho-L-threonyl-[protein] + ADP + H(+). In Schizosaccharomyces pombe (strain 972 / ATCC 24843) (Fission yeast), this protein is Serine/threonine-protein kinase pef1 (pef1).